The primary structure comprises 148 residues: 3-dehydroquinate dehydratase (148 aa).

The Proton acceptor role is filled by Tyr23. Residues Asn75, His81, and Asp88 each contribute to the substrate site. The Proton donor role is filled by His101. Substrate is bound by residues 102 to 103 and Arg112; that span reads LS.

The protein belongs to the type-II 3-dehydroquinase family. Homododecamer.

The enzyme catalyses 3-dehydroquinate = 3-dehydroshikimate + H2O. It participates in metabolic intermediate biosynthesis; chorismate biosynthesis; chorismate from D-erythrose 4-phosphate and phosphoenolpyruvate: step 3/7. Its function is as follows. Catalyzes a trans-dehydration via an enolate intermediate. This is 3-dehydroquinate dehydratase from Xanthomonas campestris pv. campestris (strain 8004).